Consider the following 344-residue polypeptide: Chalcone synthase A (344 aa).

Residue Cys167 is part of the active site.

It belongs to the thiolase-like superfamily. Chalcone/stilbene synthases family.

The catalysed reaction is (E)-4-coumaroyl-CoA + 3 malonyl-CoA + 3 H(+) = 2',4,4',6'-tetrahydroxychalcone + 3 CO2 + 4 CoA. Its pathway is secondary metabolite biosynthesis; flavonoid biosynthesis. Its function is as follows. The primary product of this enzyme is 4,2',4',6'-tetrahydroxychalcone (also termed naringenin-chalcone or chalcone) which can under specific conditions spontaneously isomerize into naringenin. This Ipomoea nil (Japanese morning glory) protein is Chalcone synthase A (CHSA).